The chain runs to 288 residues: Shikimate kinase (288 aa).

ATP is bound at residue 81–91 (PVASGLKSSSA).

Belongs to the GHMP kinase family. Archaeal shikimate kinase subfamily.

It localises to the cytoplasm. The enzyme catalyses shikimate + ATP = 3-phosphoshikimate + ADP + H(+). The protein operates within metabolic intermediate biosynthesis; chorismate biosynthesis; chorismate from D-erythrose 4-phosphate and phosphoenolpyruvate: step 5/7. The polypeptide is Shikimate kinase (Methanothrix thermoacetophila (strain DSM 6194 / JCM 14653 / NBRC 101360 / PT) (Methanosaeta thermophila)).